Here is a 573-residue protein sequence, read N- to C-terminus: Excitatory amino acid transporter 2 (573 aa).

Positions 1–11 (MASTEGANNMP) are enriched in polar residues. A disordered region spans residues 1–29 (MASTEGANNMPKQVEVRMHDSHLSSEEPK). The Cytoplasmic segment spans residues 1 to 44 (MASTEGANNMPKQVEVRMHDSHLSSEEPKHRNLGMRMCDKLGKN). Residues serine 3, serine 21, serine 24, and serine 25 each carry the phosphoserine modification. Residues 14–29 (VEVRMHDSHLSSEEPK) show a composition bias toward basic and acidic residues. Cysteine 38 is lipidated: S-palmitoyl cysteine. A run of 3 helical transmembrane segments spans residues 45-64 (LLLS…GGLL), 88-108 (MLKM…LSGL), and 121-142 (MVYY…VLAI). Asparagine 205 and asparagine 215 each carry an N-linked (GlcNAc...) asparagine glycan. Helical transmembrane passes span 235 to 258 (FKDG…MGKM), 268 to 295 (FFNI…ACLI), and 317 to 338 (ITVI…YFVV). An intramembrane region (discontinuously helical) is located at residues 344 to 374 (FSFFAGIFQAWITALGTASSAGTLPVTFRCL). 361-363 (ASS) contacts L-aspartate. A helical transmembrane segment spans residues 384–410 (VTRFVLPVGATINMDGTALYEAVAAIF). 3 residues coordinate Na(+): glycine 392, threonine 394, and asparagine 396. Residues threonine 400, 441 to 445 (IPSAG), aspartate 474, and asparagine 481 contribute to the L-aspartate site. The segment at residues 424 to 457 (IVTVSLTATLASIGAASIPSAGLVTMLLILTAVG) is an intramembrane region (discontinuously helical). Residues 471 to 492 (WLLDRMRTSVNVVGDSFGAGIV) form a helical membrane-spanning segment. Na(+) is bound by residues asparagine 481 and aspartate 485. Phosphoserine is present on residues serine 505, serine 520, serine 531, and serine 533. Tyrosine 538 bears the Phosphotyrosine mark. Phosphoserine is present on residues serine 543, serine 559, and serine 563.

The protein belongs to the dicarboxylate/amino acid:cation symporter (DAACS) (TC 2.A.23) family. SLC1A2 subfamily. In terms of assembly, homotrimer. Interacts with AJUBA. Glycosylated. In terms of processing, palmitoylation at Cys-38 is not required for correct subcellular localization, but is important for glutamate uptake activity. Localized in brain and is highly enriched in the Purkinje cell layer in cerebellum.

It localises to the cell membrane. The catalysed reaction is K(+)(in) + L-glutamate(out) + 3 Na(+)(out) + H(+)(out) = K(+)(out) + L-glutamate(in) + 3 Na(+)(in) + H(+)(in). It catalyses the reaction D-aspartate(out) + K(+)(in) + 3 Na(+)(out) + H(+)(out) = D-aspartate(in) + K(+)(out) + 3 Na(+)(in) + H(+)(in). The enzyme catalyses K(+)(in) + L-aspartate(out) + 3 Na(+)(out) + H(+)(out) = K(+)(out) + L-aspartate(in) + 3 Na(+)(in) + H(+)(in). Its function is as follows. Sodium-dependent, high-affinity amino acid transporter that mediates the uptake of L-glutamate and also L-aspartate and D-aspartate. Functions as a symporter that transports one amino acid molecule together with two or three Na(+) ions and one proton, in parallel with the counter-transport of one K(+) ion. Mediates Cl(-) flux that is not coupled to amino acid transport; this avoids the accumulation of negative charges due to aspartate and Na(+) symport. Essential for the rapid removal of released glutamate from the synaptic cleft, and for terminating the postsynaptic action of glutamate. The polypeptide is Excitatory amino acid transporter 2 (Slc1a2) (Rattus norvegicus (Rat)).